The following is a 300-amino-acid chain: Ribosomal protein bS6--L-glutamate ligase (300 aa).

One can recognise an ATP-grasp domain in the interval 104 to 287; it reads MQLLARQGID…IAGKMIRWIE (184 aa). ATP is bound by residues Lys-141, 178-179, Asp-187, and 211-213; these read EY and RSN. 3 residues coordinate Mg(2+): Asp-248, Glu-260, and Asn-262. Mn(2+)-binding residues include Asp-248, Glu-260, and Asn-262.

The protein belongs to the RimK family. It depends on Mg(2+) as a cofactor. Mn(2+) is required as a cofactor.

In terms of biological role, an L-glutamate ligase that catalyzes the ATP-dependent post-translational addition of glutamate residues to the C-terminus of ribosomal protein bS6 (RpsF). Is also able to catalyze the synthesis of poly-alpha-glutamate in vitro, via ATP hydrolysis from unprotected glutamate as substrate. The number of glutamate residues added to either RpsF or to poly-alpha-glutamate changes with pH. The sequence is that of Ribosomal protein bS6--L-glutamate ligase from Shigella flexneri serotype 5b (strain 8401).